We begin with the raw amino-acid sequence, 214 residues long: Adenylate kinase (214 aa).

14–19 is a binding site for ATP; it reads GSGKGT. The segment at 34-63 is NMP; the sequence is SSGDLFRSAIKSATPLGSKAAEYINKGLLV. AMP is bound by residues S35, R40, 61–63, 89–92, and Q96; these read LLV and GFPR. Residues 130 to 163 form an LID region; it reads SRFICPACNYVYNQSQGFKECPTCHVALIRRSDD. R131 provides a ligand contact to ATP. The Zn(2+) site is built by C134 and C137. ATP is bound at residue 140 to 141; that stretch reads VY. Zn(2+) contacts are provided by C150 and C153. The AMP site is built by R160 and R171. T199 is a binding site for ATP.

This sequence belongs to the adenylate kinase family. As to quaternary structure, monomer.

It localises to the cytoplasm. It carries out the reaction AMP + ATP = 2 ADP. Its pathway is purine metabolism; AMP biosynthesis via salvage pathway; AMP from ADP: step 1/1. Catalyzes the reversible transfer of the terminal phosphate group between ATP and AMP. Plays an important role in cellular energy homeostasis and in adenine nucleotide metabolism. The sequence is that of Adenylate kinase from Chlamydia caviae (strain ATCC VR-813 / DSM 19441 / 03DC25 / GPIC) (Chlamydophila caviae).